We begin with the raw amino-acid sequence, 191 residues long: Thymidylate kinase (191 aa).

Residue 7-14 (GVDGAGKS) coordinates ATP.

This sequence belongs to the thymidylate kinase family.

It catalyses the reaction dTMP + ATP = dTDP + ADP. Phosphorylation of dTMP to form dTDP in both de novo and salvage pathways of dTTP synthesis. The polypeptide is Thymidylate kinase (tmk) (Helicobacter pylori (strain ATCC 700392 / 26695) (Campylobacter pylori)).